A 500-amino-acid chain; its full sequence is NAD(P)H-quinone oxidoreductase chain 4, chloroplastic (500 aa).

A run of 14 helical transmembrane segments spans residues 4 to 24, 31 to 51, 84 to 104, 111 to 129, 134 to 154, 167 to 187, 208 to 228, 242 to 262, 272 to 292, 305 to 325, 330 to 350, 386 to 406, 416 to 436, and 463 to 483; these read FPWLTIFVVLPISGGSLIFLF, VIKWYTIFICIFELLLMTYAF, GFSLGPILLTGFITTLATLAA, SRLFHFLMLAMYSGQIGLF, LLLFFIMWELELIPVYLLLSM, FILYTAGGSVFLLMGALGIAL, ALEIFFYIGFLIAFAVKSPII, HYSTCMLLAGILLKMGAYGLV, AHSIFSPWLIIVGVMQIIYAA, IAYSSVSHMGFIIIGICSISD, GAILQIISHGFIGAALFFLAG, LALPGMSGFFAELIVFFGIIT, ILITFVMAVGMILTPIYLLSM, and FVSISILLPVIGIGFYPDFVF.

The protein belongs to the complex I subunit 4 family.

The protein resides in the plastid. The protein localises to the chloroplast thylakoid membrane. It catalyses the reaction a plastoquinone + NADH + (n+1) H(+)(in) = a plastoquinol + NAD(+) + n H(+)(out). The catalysed reaction is a plastoquinone + NADPH + (n+1) H(+)(in) = a plastoquinol + NADP(+) + n H(+)(out). The polypeptide is NAD(P)H-quinone oxidoreductase chain 4, chloroplastic (Manihot esculenta (Cassava)).